Reading from the N-terminus, the 122-residue chain is Bet1-like SNARE 1-1 (122 aa).

Residues 1–103 lie on the Cytoplasmic side of the membrane; the sequence is MNPRREPRGG…VFETKSSRRM (103 aa). Residues 32–94 form the t-SNARE coiled-coil homology domain; sequence EINEHENERA…SGTMDRFKTV (63 aa). A Phosphoserine modification is found at serine 56. Residues 104 to 121 traverse the membrane as a helical; Anchor for type IV membrane protein segment; that stretch reads LTLVASFVGLFLVIYYLT. Arginine 122 is a topological domain (vesicular).

The protein belongs to the BET1 family.

The protein resides in the golgi apparatus membrane. It localises to the endoplasmic reticulum membrane. Its function is as follows. Required for vesicular transport from the ER to the Golgi complex. Functions as a SNARE associated with ER-derived vesicles. The sequence is that of Bet1-like SNARE 1-1 (BET11) from Arabidopsis thaliana (Mouse-ear cress).